A 417-amino-acid chain; its full sequence is XO lethal protein 1 (417 aa).

Positions 373–417 are disordered; the sequence is VSPGETSSEGISDEHHYEEYDEDDIMEEEEAPSARQDDTYDEDEE. Residues 391–403 show a composition bias toward acidic residues; sequence EYDEDDIMEEEEA.

It belongs to the GHMP kinase family. Xol-1 subfamily.

Its subcellular location is the nucleus. In terms of biological role, sex-determining factor that is required for sexual differentiation and X chromosome dosage compensation to promote male development. High expression during gastrulation triggers male development, while low expression at that time triggers hermaphrodite development. Although related to GHMP kinase, its mode of action remains unclear. The chain is XO lethal protein 1 from Caenorhabditis elegans.